A 191-amino-acid chain; its full sequence is Cell division protein SepF (191 aa).

Over residues 153–178 (FPEEASPSNVSSKKTSQYKFETNTTP) the composition is skewed to polar residues. Residues 153–191 (FPEEASPSNVSSKKTSQYKFETNTTPEPAWGESKLSAYN) are disordered.

The protein belongs to the SepF family. Homodimer. Interacts with FtsZ.

The protein resides in the cytoplasm. Cell division protein that is part of the divisome complex and is recruited early to the Z-ring. Probably stimulates Z-ring formation, perhaps through the cross-linking of FtsZ protofilaments. Its function overlaps with FtsA. In Prochlorococcus marinus subsp. pastoris (strain CCMP1986 / NIES-2087 / MED4), this protein is Cell division protein SepF.